The chain runs to 360 residues: DNA replication and repair protein RecF (360 aa).

30–37 (GQNGSGKT) lines the ATP pocket.

The protein belongs to the RecF family.

The protein resides in the cytoplasm. The RecF protein is involved in DNA metabolism; it is required for DNA replication and normal SOS inducibility. RecF binds preferentially to single-stranded, linear DNA. It also seems to bind ATP. The sequence is that of DNA replication and repair protein RecF from Shewanella baltica (strain OS223).